The primary structure comprises 965 residues: Glycine dehydrogenase (decarboxylating) (965 aa).

The residue at position 711 (K711) is an N6-(pyridoxal phosphate)lysine.

It belongs to the GcvP family. In terms of assembly, the glycine cleavage system is composed of four proteins: P, T, L and H. Pyridoxal 5'-phosphate is required as a cofactor.

The catalysed reaction is N(6)-[(R)-lipoyl]-L-lysyl-[glycine-cleavage complex H protein] + glycine + H(+) = N(6)-[(R)-S(8)-aminomethyldihydrolipoyl]-L-lysyl-[glycine-cleavage complex H protein] + CO2. The glycine cleavage system catalyzes the degradation of glycine. The P protein binds the alpha-amino group of glycine through its pyridoxal phosphate cofactor; CO(2) is released and the remaining methylamine moiety is then transferred to the lipoamide cofactor of the H protein. The protein is Glycine dehydrogenase (decarboxylating) of Psychrobacter cryohalolentis (strain ATCC BAA-1226 / DSM 17306 / VKM B-2378 / K5).